The primary structure comprises 341 residues: Ketol-acid reductoisomerase (NADP(+)) (341 aa).

Residues 1–182 (MTEMFYDDDA…GGTRAGVIKT (182 aa)) form the KARI N-terminal Rossmann domain. Residues 25-28 (YGSQ), Lys48, Ser51, Ser53, and 83-86 (DQHQ) contribute to the NADP(+) site. His108 is an active-site residue. Gly134 serves as a coordination point for NADP(+). A KARI C-terminal knotted domain is found at 183 to 328 (TFTEETETDL…RELRGLFSWQ (146 aa)). Residues Asp191, Glu195, Glu227, and Glu231 each contribute to the Mg(2+) site. Ser252 contacts substrate.

This sequence belongs to the ketol-acid reductoisomerase family. The cofactor is Mg(2+).

It carries out the reaction (2R)-2,3-dihydroxy-3-methylbutanoate + NADP(+) = (2S)-2-acetolactate + NADPH + H(+). The enzyme catalyses (2R,3R)-2,3-dihydroxy-3-methylpentanoate + NADP(+) = (S)-2-ethyl-2-hydroxy-3-oxobutanoate + NADPH + H(+). It functions in the pathway amino-acid biosynthesis; L-isoleucine biosynthesis; L-isoleucine from 2-oxobutanoate: step 2/4. It participates in amino-acid biosynthesis; L-valine biosynthesis; L-valine from pyruvate: step 2/4. Involved in the biosynthesis of branched-chain amino acids (BCAA). Catalyzes an alkyl-migration followed by a ketol-acid reduction of (S)-2-acetolactate (S2AL) to yield (R)-2,3-dihydroxy-isovalerate. In the isomerase reaction, S2AL is rearranged via a Mg-dependent methyl migration to produce 3-hydroxy-3-methyl-2-ketobutyrate (HMKB). In the reductase reaction, this 2-ketoacid undergoes a metal-dependent reduction by NADPH to yield (R)-2,3-dihydroxy-isovalerate. This chain is Ketol-acid reductoisomerase (NADP(+)), found in Arthrobacter sp. (strain FB24).